The following is a 70-amino-acid chain: Brevinin-1Vb (70 aa).

Residues 1–22 (MFTLKKSLLLLFFLGTINLSLC) form the signal peptide. Residues 23–44 (EEERNAEEERRDEPDEMNVEVE) constitute a propeptide that is removed on maturation. An intrachain disulfide couples Cys64 to Cys70.

In terms of tissue distribution, expressed by the skin glands.

The protein resides in the secreted. Its function is as follows. Antimicrobial peptide. The chain is Brevinin-1Vb from Odorrana versabilis (Chinese bamboo leaf odorous frog).